We begin with the raw amino-acid sequence, 439 residues long: Glutamine synthetase (439 aa).

The GS beta-grasp domain occupies 12-93; that stretch reads SKIKFVQLVF…VYGFIYKDNK (82 aa). One can recognise a GS catalytic domain in the interval 99-439; sequence PRGILKRALE…EWELERYFFL (341 aa). The Mg(2+) site is built by E122 and E124. Residue E172 coordinates ATP. Mg(2+) contacts are provided by E177 and E184. L-glutamate is bound at residue G229. H233 is a Mg(2+) binding site. ATP is bound by residues 235–237 and S237; that span reads HIS. R283, E289, and R301 together coordinate L-glutamate. ATP-binding residues include R301, R306, and K313. Residue E318 coordinates Mg(2+). R320 serves as a coordination point for L-glutamate.

Belongs to the glutamine synthetase family. Oligomer of 12 subunits arranged in the form of two hexagons. The cofactor is Mg(2+).

Its subcellular location is the cytoplasm. The enzyme catalyses L-glutamate + NH4(+) + ATP = L-glutamine + ADP + phosphate + H(+). In terms of biological role, probably involved in nitrogen metabolism via ammonium assimilation. Catalyzes the ATP-dependent biosynthesis of glutamine from glutamate and ammonia. The chain is Glutamine synthetase from Pyrococcus furiosus (strain ATCC 43587 / DSM 3638 / JCM 8422 / Vc1).